A 168-amino-acid chain; its full sequence is Ribosome maturation factor RimM (168 aa).

The 74-residue stretch at 95 to 168 folds into the PRC barrel domain; the sequence is KEGYYWSDLI…QIMVDWELDY (74 aa).

The protein belongs to the RimM family. Binds ribosomal protein uS19.

The protein resides in the cytoplasm. An accessory protein needed during the final step in the assembly of 30S ribosomal subunit, possibly for assembly of the head region. Essential for efficient processing of 16S rRNA. May be needed both before and after RbfA during the maturation of 16S rRNA. It has affinity for free ribosomal 30S subunits but not for 70S ribosomes. This is Ribosome maturation factor RimM from Nitrosomonas eutropha (strain DSM 101675 / C91 / Nm57).